The chain runs to 266 residues: Putative carbamate hydrolase RutD (266 aa).

Residues 14–238 (PVVVLSAGLG…RVEMPWGGHA (225 aa)) enclose the AB hydrolase-1 domain.

The protein belongs to the AB hydrolase superfamily. Hydrolase RutD family.

It catalyses the reaction carbamate + 2 H(+) = NH4(+) + CO2. In terms of biological role, involved in pyrimidine catabolism. May facilitate the hydrolysis of carbamate, a reaction that can also occur spontaneously. The polypeptide is Putative carbamate hydrolase RutD (Klebsiella pneumoniae (strain 342)).